The following is a 287-amino-acid chain: ATP synthase gamma chain (287 aa).

This sequence belongs to the ATPase gamma chain family. In terms of assembly, F-type ATPases have 2 components, CF(1) - the catalytic core - and CF(0) - the membrane proton channel. CF(1) has five subunits: alpha(3), beta(3), gamma(1), delta(1), epsilon(1). CF(0) has three main subunits: a, b and c.

It is found in the cell inner membrane. Its function is as follows. Produces ATP from ADP in the presence of a proton gradient across the membrane. The gamma chain is believed to be important in regulating ATPase activity and the flow of protons through the CF(0) complex. This Yersinia pestis protein is ATP synthase gamma chain.